The chain runs to 141 residues: Large ribosomal subunit protein uL11 (141 aa).

This sequence belongs to the universal ribosomal protein uL11 family. As to quaternary structure, part of the ribosomal stalk of the 50S ribosomal subunit. Interacts with L10 and the large rRNA to form the base of the stalk. L10 forms an elongated spine to which L12 dimers bind in a sequential fashion forming a multimeric L10(L12)X complex. In terms of processing, one or more lysine residues are methylated.

Forms part of the ribosomal stalk which helps the ribosome interact with GTP-bound translation factors. This is Large ribosomal subunit protein uL11 from Microcystis aeruginosa (strain NIES-843 / IAM M-2473).